Reading from the N-terminus, the 259-residue chain is Cytochrome c oxidase subunit 3 (259 aa).

7 helical membrane passes run 13 to 33, 36 to 56, 80 to 100, 125 to 145, 154 to 174, 195 to 215, and 237 to 257; these read PWPL…TSWF, HGFI…FQWW, GMVL…WAYF, FQIP…VTWA, HAEA…FTLL, FFVA…FLLI, and AWYW…IYWW.

It belongs to the cytochrome c oxidase subunit 3 family. Component of the cytochrome c oxidase (complex IV, CIV), a multisubunit enzyme composed of a catalytic core of 3 subunits and several supernumerary subunits. The complex exists as a monomer or a dimer and forms supercomplexes (SCs) in the inner mitochondrial membrane with ubiquinol-cytochrome c oxidoreductase (cytochrome b-c1 complex, complex III, CIII).

It localises to the mitochondrion inner membrane. The enzyme catalyses 4 Fe(II)-[cytochrome c] + O2 + 8 H(+)(in) = 4 Fe(III)-[cytochrome c] + 2 H2O + 4 H(+)(out). Its function is as follows. Component of the cytochrome c oxidase, the last enzyme in the mitochondrial electron transport chain which drives oxidative phosphorylation. The respiratory chain contains 3 multisubunit complexes succinate dehydrogenase (complex II, CII), ubiquinol-cytochrome c oxidoreductase (cytochrome b-c1 complex, complex III, CIII) and cytochrome c oxidase (complex IV, CIV), that cooperate to transfer electrons derived from NADH and succinate to molecular oxygen, creating an electrochemical gradient over the inner membrane that drives transmembrane transport and the ATP synthase. Cytochrome c oxidase is the component of the respiratory chain that catalyzes the reduction of oxygen to water. Electrons originating from reduced cytochrome c in the intermembrane space (IMS) are transferred via the dinuclear copper A center (CU(A)) of subunit 2 and heme A of subunit 1 to the active site in subunit 1, a binuclear center (BNC) formed by heme A3 and copper B (CU(B)). The BNC reduces molecular oxygen to 2 water molecules using 4 electrons from cytochrome c in the IMS and 4 protons from the mitochondrial matrix. The sequence is that of Cytochrome c oxidase subunit 3 (COIII) from Heterololigo bleekeri (Spear squid).